A 318-amino-acid chain; its full sequence is 4-hydroxy-3-methylbut-2-enyl diphosphate reductase (318 aa).

Residue C21 coordinates [4Fe-4S] cluster. 2 residues coordinate (2E)-4-hydroxy-3-methylbut-2-enyl diphosphate: H50 and H83. Dimethylallyl diphosphate is bound by residues H50 and H83. Isopentenyl diphosphate contacts are provided by H50 and H83. Position 105 (C105) interacts with [4Fe-4S] cluster. H133 serves as a coordination point for (2E)-4-hydroxy-3-methylbut-2-enyl diphosphate. H133 provides a ligand contact to dimethylallyl diphosphate. Residue H133 coordinates isopentenyl diphosphate. E135 acts as the Proton donor in catalysis. T176 lines the (2E)-4-hydroxy-3-methylbut-2-enyl diphosphate pocket. C206 is a binding site for [4Fe-4S] cluster. 4 residues coordinate (2E)-4-hydroxy-3-methylbut-2-enyl diphosphate: S234, S235, N236, and S278. The dimethylallyl diphosphate site is built by S234, S235, N236, and S278. Isopentenyl diphosphate is bound by residues S234, S235, N236, and S278.

It belongs to the IspH family. [4Fe-4S] cluster serves as cofactor.

The catalysed reaction is isopentenyl diphosphate + 2 oxidized [2Fe-2S]-[ferredoxin] + H2O = (2E)-4-hydroxy-3-methylbut-2-enyl diphosphate + 2 reduced [2Fe-2S]-[ferredoxin] + 2 H(+). It carries out the reaction dimethylallyl diphosphate + 2 oxidized [2Fe-2S]-[ferredoxin] + H2O = (2E)-4-hydroxy-3-methylbut-2-enyl diphosphate + 2 reduced [2Fe-2S]-[ferredoxin] + 2 H(+). Its pathway is isoprenoid biosynthesis; dimethylallyl diphosphate biosynthesis; dimethylallyl diphosphate from (2E)-4-hydroxy-3-methylbutenyl diphosphate: step 1/1. It functions in the pathway isoprenoid biosynthesis; isopentenyl diphosphate biosynthesis via DXP pathway; isopentenyl diphosphate from 1-deoxy-D-xylulose 5-phosphate: step 6/6. In terms of biological role, catalyzes the conversion of 1-hydroxy-2-methyl-2-(E)-butenyl 4-diphosphate (HMBPP) into a mixture of isopentenyl diphosphate (IPP) and dimethylallyl diphosphate (DMAPP). Acts in the terminal step of the DOXP/MEP pathway for isoprenoid precursor biosynthesis. In Shewanella oneidensis (strain ATCC 700550 / JCM 31522 / CIP 106686 / LMG 19005 / NCIMB 14063 / MR-1), this protein is 4-hydroxy-3-methylbut-2-enyl diphosphate reductase.